The primary structure comprises 346 residues: Methionine import ATP-binding protein MetN 1 (346 aa).

An ABC transporter domain is found at 2–241 (IELKNVSKVF…PQHVTTKKFV (240 aa)). 38 to 45 (GYSGAGKS) is a binding site for ATP.

Belongs to the ABC transporter superfamily. Methionine importer (TC 3.A.1.24) family. The complex is composed of two ATP-binding proteins (MetN), two transmembrane proteins (MetI) and a solute-binding protein (MetQ).

The protein localises to the cell membrane. It carries out the reaction L-methionine(out) + ATP + H2O = L-methionine(in) + ADP + phosphate + H(+). It catalyses the reaction D-methionine(out) + ATP + H2O = D-methionine(in) + ADP + phosphate + H(+). Part of the ABC transporter complex MetNIQ involved in methionine import. Responsible for energy coupling to the transport system. The sequence is that of Methionine import ATP-binding protein MetN 1 from Bacillus cereus (strain ZK / E33L).